Here is a 315-residue protein sequence, read N- to C-terminus: WD repeat domain-containing protein 83 (315 aa).

7 WD repeats span residues 23–62 (CQQG…LLKT), 65–104 (GHGY…VTRK), 107–146 (GHAG…MEPI), 151–188 (ESQD…LQVD), 189–228 (YIGS…MLGE), 233–272 (VNKG…LTLK), and 275–313 (VGKA…AAEN).

This sequence belongs to the WD repeat MORG1 family.

It localises to the cytoplasm. Functionally, molecular scaffold protein for various multimeric protein complexes. Acts as a module in the assembly of a multicomponent scaffold for the ERK pathway, linking ERK responses to specific agonists. Also involved in response to hypoxia by acting as a negative regulator of HIF1A/HIF-1-alpha. In Danio rerio (Zebrafish), this protein is WD repeat domain-containing protein 83 (wdr83).